The sequence spans 1308 residues: Cadherin-related family member 2 (1308 aa).

Positions 1–20 (MAWLWLLCALLPAFMVSVTA) are cleaved as a signal peptide. The Extracellular segment spans residues 21-1152 (NSPPSFGVNM…EPDQQKLLTS (1132 aa)). 9 Cadherin domains span residues 33 to 124 (VTLP…IPVF), 125 to 241 (LNTE…DPRF), 242 to 353 (IREF…KPEF), 368 to 480 (AQVN…RPVF), 481 to 586 (SQSL…PPVV), 586 to 695 (VRGS…LPVF), 695 to 807 (FNQS…PPTL), 809 to 927 (AASL…APYF), and 929 to 1051 (PNNQ…RLQF). The chain crosses the membrane as a helical span at residues 1153–1173 (VIIGLVVSLVLVLVILITALV). Residues 1174 to 1308 (CLRKSYHRKL…TNPGLDTTDL (135 aa)) are Cytoplasmic-facing. The tract at residues 1178–1308 (SYHRKLRAMK…TNPGLDTTDL (131 aa)) is mediates interaction with USH1C and MYO7B and is required for proper localization to microvilli tips and function in microvilli organization. S1245 carries the post-translational modification Phosphoserine. The tract at residues 1251–1308 (VDLDMDSKEFKRKDLPGDPPEPDPEPLTAVLSGRSAGASEQQKKNLSFTNPGLDTTDL) is disordered. A compositionally biased stretch (basic and acidic residues) spans 1255 to 1266 (MDSKEFKRKDLP). Over residues 1288–1308 (ASEQQKKNLSFTNPGLDTTDL) the composition is skewed to polar residues. S1297 carries the phosphoserine modification.

In terms of assembly, part of the IMAC/intermicrovillar adhesion complex/intermicrovillar tip-link complex composed of ANKS4B, MYO7B, USH1C, CDHR2 and CDHR5. Interacts with MAST2. Interacts (via cytoplasmic domain) with USH1C and MYO7B; required for proper localization of CDHR2 to microvilli tips and its function in brush border differentiation.

It localises to the apical cell membrane. The protein resides in the cell projection. The protein localises to the microvillus membrane. Its subcellular location is the cell junction. Functionally, intermicrovillar adhesion molecule that forms, via its extracellular domain, calcium-dependent heterophilic complexes with CDHR5 on adjacent microvilli. Thereby, controls the packing of microvilli at the apical membrane of epithelial cells. Through its cytoplasmic domain, interacts with microvillus cytoplasmic proteins to form the intermicrovillar adhesion complex/IMAC. This complex plays a central role in microvilli and epithelial brush border differentiation. May also play a role in cell-cell adhesion and contact inhibition in epithelial cells. This Mus musculus (Mouse) protein is Cadherin-related family member 2.